The chain runs to 87 residues: HssA/B-like protein 28 (87 aa).

It belongs to the hssA/B family.

In Dictyostelium discoideum (Social amoeba), this protein is HssA/B-like protein 28 (hssl28).